The primary structure comprises 447 residues: MREIVHLQTGQCGNQIGAAFWQNISGEHGLDSNGVYNGTSELQLERMSVYFNEASGNKYVPRAVLVDLEPGTMDAVRAGPFGQLFRPDNFVFGQSGAGNNWAKGHYTEGAELVDQVLDVVRREAEGCDCLQGFQITHSLGGGTGAGMGTLLISKIREEFPDRMMATFSVVPSPKVSDTVVEPYNATLSVHQLVENSDETFCIDNEALYDICMRTLKLSNPSYGDLNHLVSAVMSGVTTCLRFPGQLNSDLRKLAVNMVPFPRLHFFMVGFAPLTSRGAHSFRAVSVPELTQQMFDPKNMMAASDFRNGRYLTCSAIFRGKVAMKDVEDQMRNVLNKNSSYFVEWIPNNVQTALCSIPPRGLKMSFTFVGNSTAIQELFKRVGEQFTAMFRRKAFLHWYTGEGMDEMEFTEAESNMNDLVSEYQQYQDAGVDEEEEEYEDDAPLEEEV.

GTP-binding residues include Gln11, Glu69, Ser138, Gly142, Thr143, Gly144, Asn204, and Asn226. Glu69 contributes to the Mg(2+) binding site. A disordered region spans residues 426–447; it reads QDAGVDEEEEEYEDDAPLEEEV. A compositionally biased stretch (acidic residues) spans 429–447; that stretch reads GVDEEEEEYEDDAPLEEEV.

The protein belongs to the tubulin family. Dimer of alpha and beta chains. A typical microtubule is a hollow water-filled tube with an outer diameter of 25 nm and an inner diameter of 15 nM. Alpha-beta heterodimers associate head-to-tail to form protofilaments running lengthwise along the microtubule wall with the beta-tubulin subunit facing the microtubule plus end conferring a structural polarity. Microtubules usually have 13 protofilaments but different protofilament numbers can be found in some organisms and specialized cells. Requires Mg(2+) as cofactor.

It localises to the cytoplasm. The protein resides in the cytoskeleton. In terms of biological role, tubulin is the major constituent of microtubules, a cylinder consisting of laterally associated linear protofilaments composed of alpha- and beta-tubulin heterodimers. Microtubules grow by the addition of GTP-tubulin dimers to the microtubule end, where a stabilizing cap forms. Below the cap, tubulin dimers are in GDP-bound state, owing to GTPase activity of alpha-tubulin. In Colletotrichum graminicola (Maize anthracnose fungus), this protein is Tubulin beta-2 chain (TUB2).